The chain runs to 300 residues: Transcription initiation factor IIB (300 aa).

Residues 2–34 (NKQKVCPACESAELIYDPERGEIVCAKCGYVIE) form a TFIIB-type zinc finger. Residues cysteine 7, cysteine 10, cysteine 26, and cysteine 29 each coordinate Zn(2+). 2 consecutive repeat copies span residues 114 to 197 (SELD…ARNL) and 210 to 291 (DYVN…ELVE).

This sequence belongs to the TFIIB family.

Its function is as follows. Stabilizes TBP binding to an archaeal box-A promoter. Also responsible for recruiting RNA polymerase II to the pre-initiation complex (DNA-TBP-TFIIB). The polypeptide is Transcription initiation factor IIB (Pyrococcus furiosus (strain ATCC 43587 / DSM 3638 / JCM 8422 / Vc1)).